The following is a 142-amino-acid chain: Putative pre-16S rRNA nuclease (142 aa).

The protein belongs to the YqgF nuclease family.

It localises to the cytoplasm. In terms of biological role, could be a nuclease involved in processing of the 5'-end of pre-16S rRNA. The sequence is that of Putative pre-16S rRNA nuclease from Staphylococcus saprophyticus subsp. saprophyticus (strain ATCC 15305 / DSM 20229 / NCIMB 8711 / NCTC 7292 / S-41).